A 745-amino-acid chain; its full sequence is Elongation factor G, mitochondrial (745 aa).

The tr-type G domain maps to E40–G317. Residues A49–T56, D116–H120, and N170–D173 each bind GTP.

It belongs to the TRAFAC class translation factor GTPase superfamily. Classic translation factor GTPase family. EF-G/EF-2 subfamily.

It localises to the mitochondrion. It functions in the pathway protein biosynthesis; polypeptide chain elongation. Functionally, mitochondrial GTPase that catalyzes the GTP-dependent ribosomal translocation step during translation elongation. During this step, the ribosome changes from the pre-translocational (PRE) to the post-translocational (POST) state as the newly formed A-site-bound peptidyl-tRNA and P-site-bound deacylated tRNA move to the P and E sites, respectively. Catalyzes the coordinated movement of the two tRNA molecules, the mRNA and conformational changes in the ribosome. Essential during development as it acts as a retrograde signal from mitochondria to the nucleus to slow down cell proliferation if mitochondrial energy output is low. This chain is Elongation factor G, mitochondrial, found in Drosophila sechellia (Fruit fly).